Here is a 554-residue protein sequence, read N- to C-terminus: Probable phospholipase D F09G2.8 (554 aa).

The Cytoplasmic segment spans residues 1–123 (MPLRLINFRQ…GNSRNRIIKP (123 aa)). The chain crosses the membrane as a helical; Signal-anchor for type II membrane protein span at residues 124–144 (ACVPISIVSLFIIALVFLPLF). Residues 145 to 554 (NEEDLASPIK…DWNSEYSKDL (410 aa)) lie on the Extracellular side of the membrane. Residues Asn181, Asn208, Asn244, and Asn266 are each glycosylated (N-linked (GlcNAc...) asparagine). The 28-residue stretch at 272–299 (GSGIIHTKFILSDIATLYIGSANMDWKS) folds into the PLD phosphodiesterase 1 domain. Catalysis depends on residues His277, Lys279, and Asp284. N-linked (GlcNAc...) asparagine glycans are attached at residues Asn333, Asn350, Asn468, and Asn513. Positions 492-518 (FTRVNHAKYMVTEDIAYIGTSNWSGDY) constitute a PLD phosphodiesterase 2 domain.

Belongs to the phospholipase D family.

The protein localises to the membrane. The enzyme catalyses a 1,2-diacyl-sn-glycero-3-phosphocholine + H2O = a 1,2-diacyl-sn-glycero-3-phosphate + choline + H(+). The sequence is that of Probable phospholipase D F09G2.8 from Caenorhabditis elegans.